The sequence spans 93 residues: DNA-directed RNA polymerase subunit Rpo11 (93 aa).

It belongs to the archaeal Rpo11/eukaryotic RPB11/RPC19 RNA polymerase subunit family. Part of the RNA polymerase complex.

It is found in the cytoplasm. The catalysed reaction is RNA(n) + a ribonucleoside 5'-triphosphate = RNA(n+1) + diphosphate. DNA-dependent RNA polymerase (RNAP) catalyzes the transcription of DNA into RNA using the four ribonucleoside triphosphates as substrates. This Methanocella arvoryzae (strain DSM 22066 / NBRC 105507 / MRE50) protein is DNA-directed RNA polymerase subunit Rpo11.